A 461-amino-acid chain; its full sequence is Divalent metal cation transporter MntH (461 aa).

11 helical membrane-spanning segments follow: residues Ala56–Trp76, Thr89–Ala109, Ala132–Ile152, Leu160–Ile180, Ala193–Ala213, Ile230–Pro250, Ile285–Phe305, Leu322–Cys342, Ala378–Gln398, Leu399–Val419, and Ser433–Val453.

The protein belongs to the NRAMP family.

The protein resides in the cell inner membrane. H(+)-stimulated, divalent metal cation uptake system. This chain is Divalent metal cation transporter MntH, found in Agrobacterium fabrum (strain C58 / ATCC 33970) (Agrobacterium tumefaciens (strain C58)).